The following is a 257-amino-acid chain: uncharacterized protein (257 aa).

2 disordered regions span residues 1–178 (MAMF…SYDS) and 194–248 (AITK…LAGN). A compositionally biased stretch (basic residues) spans 12–21 (SKLKKGRRKL). A compositionally biased stretch (low complexity) spans 50-71 (NTNSGSSSDGEDGLLTSSGSDS). The segment covering 72–94 (VFNSTDYFSTPEDSQNCTPSDVS) has biased composition (polar residues). The span at 102–114 (LDFKPADVLHDSE) shows a compositional bias: basic and acidic residues. The segment covering 115 to 126 (NSTSPKFITSLV) has biased composition (polar residues). The segment covering 127–136 (SSDSENSGAD) has biased composition (low complexity). A compositionally biased stretch (acidic residues) spans 163–178 (ITSEEDCCVQEDSYDS).

Belongs to the herpesviridae BKRF4 family.

This is an uncharacterized protein from Saimiriine herpesvirus 2 (strain 11) (SaHV-2).